Reading from the N-terminus, the 297-residue chain is Homoserine kinase (297 aa).

82 to 92 (PLTRGLGSSAS) contacts ATP.

The protein belongs to the GHMP kinase family. Homoserine kinase subfamily.

Its subcellular location is the cytoplasm. The enzyme catalyses L-homoserine + ATP = O-phospho-L-homoserine + ADP + H(+). Its pathway is amino-acid biosynthesis; L-threonine biosynthesis; L-threonine from L-aspartate: step 4/5. Catalyzes the ATP-dependent phosphorylation of L-homoserine to L-homoserine phosphate. The sequence is that of Homoserine kinase from Bacillus cereus (strain ATCC 10987 / NRS 248).